Reading from the N-terminus, the 1147-residue chain is MDAVNAFNQELFSLMDMKPPISRAKMILITKAAIKAIKLYKHVVQIVEKFIKKCKPEYKVPGLYVIDSIVRQSRHQFGTDKDVFGPRFSKNITATFQYLYLCPSEDKSKIVRVLNLWQKNGVFKIEIIQPLLDMAAGTSNAAPVAENVTNNEGSPPPPVKVSSEPPTQATPNSVPAVPQLPSSDAFAAVAQLFQTTQGQQLQQILQTFQQPPKPQSPALDNAVMAQVQAITAQLKTTPTQPSEQKAAFPPPEQKTAFDKKLLDRFDYDDEPEAVEESKKEDTTAVTTTAPAAAVPPAPTATVPAAAAPAAASPPPPQAPFGFPGDGMQQPAYTQHQNMDQFQPRMMGIQQDPMHHQVPLPPNGQMPGFGLLPTPPFPPMAQPVIPPTPPVQQPFQASFQAQNEPLTQKPHQQEMEVEQPCIQEVKRHMSDNRKSRSRSASRSPKRRRSRSGSRSRRSRHRRSRSRSRDRRRHSPRSRSQERRDREKERERRQKGLPQVKPETASVCSTTLWVGQLDKRTTQQDVASLLEEFGPIESINMIPPRGCAYIVMVHRQDAYRALQKLSRGNYKVNQKSIKIAWALNKGIKADYKQYWDVELGVTYIPWDKVKPEELESFCEGGMLDSDTLNPDWKGIPKKPENEVAQNGGAETSHTEPVSPIPKPLPVPVPPIPVPAPITVPPPQVPPHQPGPPVVGALQPPAFTPPLGIPPPGFGPGVPPPPPPPPFLRPGFNPMHLPPGFLPPGPPPPITPPVSIPPPHTPPISIPNSTIAGINEDTTKDLSIGNPIPTVVSGARGNAESGDSVKMYGSAVPPAAPTNLPTPPVTQPVSLLGTQGVAPGPVIGLQAPSTGLLGARPGLIPLQRPPGMPPPHLQRFPLMPPRPMPPHMMHRGPPPGPGGFAMPPPHGMKGPFPPHGPFVRPGGMPGLGGPGPGPGGPEDRDGRQQPPQQPQQQPQPQAPQQPQQQQQQQPPPSQQPPPTQQQPQQFRNDNRQQFNSGRDQERFGRRSFGNRVENDRERYGNRNDDRDNSNRDRREWGRRSPDRDRHRDLEERNRRSSGHRDRERDSRDRESRREKEEARGKEKPEVTDRAGGNKTVEPPISQVGNVDTASELEKGVSEAAVLKPSEELPAEATSSVEPEKDSGSAAEAPR.

The region spanning M1–S139 is the CID domain. K49 bears the N6-acetyllysine mark. 4 disordered regions span residues A145–Q179, K235–K254, D269–A331, and V424–T502. At S154 the chain carries Phosphoserine. Low complexity-rich tracts occupy residues T283 to A292 and T299 to A310. Residues V424 to K433 are compositionally biased toward basic and acidic residues. A compositionally biased stretch (basic residues) spans S434–R475. Basic and acidic residues predominate over residues R477–Q492. Residues T508–N582 enclose the RRM domain. Disordered regions lie at residues D629–P661 and R879–R1147. S656 bears the Phosphoserine mark. The segment covering R879–G913 has biased composition (pro residues). Residues Q941–Q965 are compositionally biased toward low complexity. Residues Q966 to Q977 are compositionally biased toward pro residues. A Phosphoserine modification is found at S1004. The segment covering V1009–D1085 has biased composition (basic and acidic residues).

As to quaternary structure, interacts with POLR2A; via C-terminal heptapeptide repeat domain (CTD) phosphorylated at 'Ser-2' and 'Ser-5'.

It localises to the nucleus. In terms of biological role, anti-terminator protein required to prevent early mRNA termination during transcription. Together with SCAF8, acts by suppressing the use of early, alternative poly(A) sites, thereby preventing the accumulation of non-functional truncated proteins. Mechanistically, associates with the phosphorylated C-terminal heptapeptide repeat domain (CTD) of the largest RNA polymerase II subunit (POLR2A), and subsequently binds nascent RNA upstream of early polyadenylation sites to prevent premature mRNA transcript cleavage and polyadenylation. Independently of SCAF8, also acts as a suppressor of transcriptional readthrough. The chain is SR-related and CTD-associated factor 4 from Homo sapiens (Human).